The chain runs to 947 residues: Mitogen-activated protein kinase kinase kinase 14 (947 aa).

Disordered stretches follow at residues 1–37 (MAVMEMACPGAPGSAVGQQKELPKAKEKTPPLGKKQS) and 135–171 (KGKRRSKARKKRKKKSSKSLAHAGVALAKPLPRTPEQ). The span at 135 to 151 (KGKRRSKARKKRKKKSS) shows a compositional bias: basic residues. The Protein kinase domain maps to 400 to 655 (ATHQLRLGRG…ELGGKVNRAL (256 aa)). The interval 401 to 653 (THQLRLGRGS…AAELGGKVNR (253 aa)) is interaction with ZFP91. ATP-binding positions include 406 to 414 (LGRGSFGEV) and Lys-429. Catalysis depends on Asp-515, which acts as the Proton acceptor. Position 559 is a phosphothreonine (Thr-559). Disordered stretches follow at residues 662–766 (KSPW…ATVP) and 805–830 (LSDDSEKNPSKASQSSRDTLSSGVHS). The segment covering 665 to 674 (WRGEYKEPRH) has biased composition (basic and acidic residues). Residues 713-727 (LQPPLPPEPPEPNKS) show a composition bias toward pro residues. Positions 741 to 752 (EPLPLSSLEPAP) are enriched in low complexity. Over residues 814–829 (SKASQSSRDTLSSGVH) the composition is skewed to polar residues.

Belongs to the protein kinase superfamily. STE Ser/Thr protein kinase family. MAP kinase kinase kinase subfamily. As to quaternary structure, interacts with TRAF2, TRAF5, TRAF6, IKKA and NFKB2/P100. Interacts with TRAF3 and PELI3. Interacts with NIBP; the interaction is direct. Interacts with ARRB1 and ARRB2. Interacts with GRB10. Interacts with ZFP91. Interacts with NLRP12; this interaction promotes proteasomal degradation of MAP3K14. Directly interacts with DDX3X. Interacts (via C-terminus and kinase domain) with PPPC3A (via N-terminus) and PPP3CB. Post-translationally, autophosphorylated. Phosphorylation at Thr-559 is required to activate its kinase activity and 'Lys-63'-linked polyubiquitination. Phosphorylated by CHUK/IKKA leading to MAP3K14 destabilization. Ubiquitinated. Undergoes both 'Lys-48'- and 'Lys-63'-linked polyubiquitination. 'Lys-48'-linked polyubiquitination leads to its degradation by the proteasome, while 'Lys-63'-linked polyubiquitination stabilizes and activates it. Weakly expressed in testis, small intestine, spleen, thymus, peripheral blood leukocytes, prostate, ovary and colon.

It localises to the cytoplasm. It carries out the reaction L-seryl-[protein] + ATP = O-phospho-L-seryl-[protein] + ADP + H(+). It catalyses the reaction L-threonyl-[protein] + ATP = O-phospho-L-threonyl-[protein] + ADP + H(+). Functionally, lymphotoxin beta-activated kinase which seems to be exclusively involved in the activation of NF-kappa-B and its transcriptional activity. Phosphorylates CHUK/IKKA, thereby promoting proteolytic processing of NFKB2/P100, which leads to NF-kappa-B activation via the non-canonical pathway. Has an essential role in the non-canonical NF-kappa-B signaling that regulates genes encoding molecules involved in B-cell survival, lymphoid organogenesis, and immune response. Could act in a receptor-selective manner. In Homo sapiens (Human), this protein is Mitogen-activated protein kinase kinase kinase 14.